Reading from the N-terminus, the 151-residue chain is Small ribosomal subunit protein uS15 (151 aa).

The protein belongs to the universal ribosomal protein uS15 family.

In Wuchereria bancrofti, this protein is Small ribosomal subunit protein uS15 (RPS13).